The primary structure comprises 43 residues: Protein PsbN (43 aa).

Residues 5–25 traverse the membrane as a helical segment; that stretch reads TLISVFVASLVIGITAYAIFV.

This sequence belongs to the PsbN family.

The protein resides in the plastid. The protein localises to the chloroplast thylakoid membrane. In terms of biological role, may play a role in photosystem I and II biogenesis. The polypeptide is Protein PsbN (Cyanidioschyzon merolae (strain NIES-3377 / 10D) (Unicellular red alga)).